A 549-amino-acid chain; its full sequence is TBC1 domain family member 3E (549 aa).

Residues 101-293 form the Rab-GAP TBC domain; sequence GMPMNIRGPM…RLWDVYLVEG (193 aa). Residues Cys318 and Cys325 are each lipidated (S-palmitoyl cysteine). The tract at residues 350-419 is disordered; that stretch reads LTRKKGDLPP…PRSSTPCPGG (70 aa). Low complexity predominate over residues 398-417; that stretch reads PRPIWSASPPRAPRSSTPCP.

Ubiquitinated by a CUL7-based E3 ligase, which leads to proteasomal degradation. In terms of processing, palmitoylation is required for membrane localization and protects TBC1D3 from ubiquitination. Expressed in pancreas, thymus and testis.

The protein resides in the cell membrane. Its function is as follows. Acts as a GTPase activating protein for RAB5. Does not act on RAB4 or RAB11. The sequence is that of TBC1 domain family member 3E from Homo sapiens (Human).